We begin with the raw amino-acid sequence, 268 residues long: Glutamate racemase (268 aa).

Substrate is bound by residues aspartate 9 to serine 10 and tyrosine 41 to glycine 42. Cysteine 73 serves as the catalytic Proton donor/acceptor. A substrate-binding site is contributed by asparagine 74–serine 75. The Proton donor/acceptor role is filled by cysteine 183. Threonine 184 to histidine 185 lines the substrate pocket.

Belongs to the aspartate/glutamate racemases family.

It carries out the reaction L-glutamate = D-glutamate. It functions in the pathway cell wall biogenesis; peptidoglycan biosynthesis. In terms of biological role, provides the (R)-glutamate required for cell wall biosynthesis. The polypeptide is Glutamate racemase (Shewanella pealeana (strain ATCC 700345 / ANG-SQ1)).